Consider the following 84-residue polypeptide: Small ribosomal subunit protein uS17 (84 aa).

It belongs to the universal ribosomal protein uS17 family. As to quaternary structure, part of the 30S ribosomal subunit.

One of the primary rRNA binding proteins, it binds specifically to the 5'-end of 16S ribosomal RNA. The protein is Small ribosomal subunit protein uS17 of Borrelia garinii subsp. bavariensis (strain ATCC BAA-2496 / DSM 23469 / PBi) (Borreliella bavariensis).